A 97-amino-acid chain; its full sequence is Large ribosomal subunit protein uL23 (97 aa).

Belongs to the universal ribosomal protein uL23 family. As to quaternary structure, part of the 50S ribosomal subunit. Contacts protein L29, and trigger factor when it is bound to the ribosome.

Functionally, one of the early assembly proteins it binds 23S rRNA. One of the proteins that surrounds the polypeptide exit tunnel on the outside of the ribosome. Forms the main docking site for trigger factor binding to the ribosome. The sequence is that of Large ribosomal subunit protein uL23 from Anaeromyxobacter dehalogenans (strain 2CP-C).